The following is a 299-amino-acid chain: HTH-type transcriptional regulator CrgA (299 aa).

The region spanning 1–60 (MKTNSEELTVFVQVVESGSFSRAAEQLAMANSAVSRIVKRLEEKLGVNLLNRTTRQLSLT) is the HTH lysR-type domain. A DNA-binding region (H-T-H motif) is located at residues 20 to 39 (FSRAAEQLAMANSAVSRIVK).

Belongs to the LysR transcriptional regulatory family. In terms of assembly, forms oligomers. Forms an octomeric ring-like structure in solution. May form hexadecamers when bound to target DNA.

Its activity is regulated as follows. Activation and repression activities are enhanced by the addition of alpha-methylene-gamma-butyrolactone (MBL), an inducer of NADPH:quinone oxidoreductase. Functionally, regulatory protein that activates transcription of mdaB, encoding a NADPH:quinone oxidoreductase, and represses its own transcription. Under the same experimental conditions, no regulation of transcription of pilus and capsule genes is detected. This chain is HTH-type transcriptional regulator CrgA, found in Neisseria meningitidis serogroup B (strain ATCC BAA-335 / MC58).